A 57-amino-acid polypeptide reads, in one-letter code: Ribosome modulation factor (57 aa).

Positions 1–28 (MKRQKRDRLERAQSQGYKAGLNGRSHDE) are disordered.

Belongs to the ribosome modulation factor family.

It is found in the cytoplasm. In terms of biological role, during stationary phase, converts 70S ribosomes to an inactive dimeric form (100S ribosomes). In Vibrio cholerae serotype O1 (strain MJ-1236), this protein is Ribosome modulation factor.